The sequence spans 245 residues: Octopine transport system permease protein OccM (245 aa).

5 helical membrane passes run 12–32 (FVAL…SVAL), 57–77 (FYIF…IYYG), 96–116 (AYWC…AEIM), 163–183 (ILMV…ITGI), and 204–224 (IYLI…WALW). One can recognise an ABC transmembrane type-1 domain in the interval 19-216 (IPLALQLAVF…ILNFIVARLF (198 aa)).

The protein belongs to the binding-protein-dependent transport system permease family. HisMQ subfamily.

The protein resides in the cell inner membrane. Component of the octopine active transport system probably consisting of four subunits: Q, M, P and T. The protein is Octopine transport system permease protein OccM (occM) of Rhizobium radiobacter (Agrobacterium tumefaciens).